Here is an 84-residue protein sequence, read N- to C-terminus: uncharacterized protein (84 aa).

The next 2 membrane-spanning stretches (helical) occupy residues 27–47 (INHHTWHIVGLFAIGLLLAML) and 52–72 (IGHVENWYLIGFAALVFFVLI).

The protein to M.tuberculosis Rv2876.

The protein resides in the cell membrane. This is an uncharacterized protein from Mycobacterium leprae (strain TN).